Here is a 3033-residue protein sequence, read N- to C-terminus: Genome polyprotein (3033 aa).

Position 2 is an N-acetylserine; by host (serine 2). The interval 2 to 23 (STNPKPQRKTKRNTNRRPQDVK) is interaction with STAT1. Positions 2 to 58 (STNPKPQRKTKRNTNRRPQDVKFPGGGQIVGGVYLLPRRGPRLGVRATRKTSERSQP) are interaction with EIF2AK2/PKR. The tract at residues 2-59 (STNPKPQRKTKRNTNRRPQDVKFPGGGQIVGGVYLLPRRGPRLGVRATRKTSERSQPR) is interaction with DDX3X. The segment at 2–75 (STNPKPQRKT…PKDRRSAGKS (74 aa)) is disordered. Over 2 to 168 (STNPKPQRKT…EDGINYATGN (167 aa)) the chain is Cytoplasmic. 2 short sequence motifs (nuclear localization signal) span residues 5 to 13 (PKPQRKTKR) and 38 to 43 (PRRGPR). Basic residues predominate over residues 7-16 (PQRKTKRNTN). The span at 32–47 (GGVYLLPRRGPRLGVR) shows a compositional bias: low complexity. Serine 53 is subject to Phosphoserine; by host. 2 consecutive short sequence motifs (nuclear localization signal) follow at residues 58 to 64 (PRGRRQP) and 66 to 71 (PKDRRS). Phosphoserine; by host is present on residues serine 99 and serine 116. Positions 112–152 (PRHRSRNLGKVIDTLTCGFADLMGYIPVVGAPVGGVARALA) are important for endoplasmic reticulum and mitochondrial localization. Residues 122–173 (VIDTLTCGFADLMGYIPVVGAPVGGVARALAHGVRVLEDGINYATGNLPGCS) form an interaction with APOA2 region. Residues 164–167 (YATG) form an important for lipid droplets localization region. Residues 169–189 (LPGCSFSIFLLALLSCMSVPV) traverse the membrane as a helical segment. Positions 178-191 (LLALLSCMSVPVSA) are cleaved as a propeptide — ER anchor for the core protein, removed in mature form by host signal peptidase. The Lumenal portion of the chain corresponds to 190–358 (SAVEVKNTSQ…TGAHWGVMFG (169 aa)). 3 N-linked (GlcNAc...) asparagine; by host glycosylation sites follow: asparagine 196, asparagine 209, and asparagine 234. Positions 265 to 296 (IVVSATFCSALYIGDVCGAIMIAAQATIISPQ) are important for fusion. A glycan (N-linked (GlcNAc...) asparagine; by host) is linked at asparagine 305. A helical transmembrane segment spans residues 359–379 (LAYFSMQGAWAKVVVILLLTA). Residues 380–729 (GVDAQTHTIS…WEWVVLLFLL (350 aa)) lie on the Lumenal side of the membrane. The interval 385-412 (THTISGHAARTTHGLVSLFTPGSQQNIQ) is HVR1. 3 N-linked (GlcNAc...) (high mannose) asparagine; by host glycosylation sites follow: asparagine 417, asparagine 423, and asparagine 430. Cystine bridges form between cysteine 429-cysteine 554, cysteine 452-cysteine 459, cysteine 488-cysteine 496, and cysteine 505-cysteine 510. The N-linked (GlcNAc...) asparagine; by host glycan is linked to asparagine 448. The segment at 475–480 (EENVTN) is HVR2. Residue asparagine 477 is glycosylated (N-linked (GlcNAc...) asparagine; by host). The interval 482-495 (DNMRPYCWHYPPRP) is CD81-binding 1. N-linked (GlcNAc...) asparagine; by host glycosylation occurs at asparagine 534. A CD81-binding 2 region spans residues 546–553 (PPRGAWFG). N-linked (GlcNAc...) asparagine; by host glycosylation occurs at asparagine 558. Disulfide bonds link cysteine 566-cysteine 571, cysteine 585-cysteine 589, cysteine 601-cysteine 624, and cysteine 611-cysteine 648. N-linked (GlcNAc...) (high mannose) asparagine; by host glycosylation is found at asparagine 627 and asparagine 649. An intrachain disulfide couples cysteine 656 to cysteine 681. The tract at residues 664-675 (SQLSPLLHSTTE) is PKR/eIF2-alpha phosphorylation homology domain (PePHD). Residues 730–750 (LADARVCACLWMLLLLGQAEA) traverse the membrane as a helical segment. Topologically, residues 751–761 (ALEKLVILHAA) are lumenal. Residues 762 to 782 (SAASSHGMLCFIIFFIAAWYI) form a helical membrane-spanning segment. At 783-786 (KGRV) the chain is on the cytoplasmic side. Residues 787–807 (TPLVTYSYLGMWSFSLLLLAL) form a helical membrane-spanning segment. At 808 to 817 (PQQAYALDTT) the chain is on the lumenal side. Residues 818–838 (EQGQIGLVLLVVISVFTLSPA) traverse the membrane as a helical segment. Residues 839 to 885 (YKILLCRSLWWLSYLLVRAEALIQDWVPPWQARGGRDGIIWAATIFC) lie on the Cytoplasmic side of the membrane. Residues 886–906 (PGVLFDITNWLLAILGPGYLL) form a helical membrane-spanning segment. The 128-residue stretch at 903-1030 (GYLLRSVLTS…EYTSKGWKLL (128 aa)) folds into the Peptidase C18 domain. The Lumenal portion of the chain corresponds to 907–932 (RSVLTSTPYFVRAQALLRICAAVRHL). The interval 908-1210 (SVLTSTPYFV…PIESLDVIIR (303 aa)) is protease NS2-3. The S-palmitoyl cysteine; by host moiety is linked to residue cysteine 926. A helical membrane pass occupies residues 933-953 (SGGKYVQMMLLTLGKWTGTYI). The interval 933–953 (SGGKYVQMMLLTLGKWTGTYI) is interaction with host SCPS1. Residues 954–1661 (YDHLSPMSGW…CMQADLEIMT (708 aa)) are Cytoplasmic-facing. Residues histidine 956, glutamate 976, and cysteine 997 each act as for protease NS2 activity; shared with dimeric partner in the active site. In terms of domain architecture, Peptidase S29 spans 1031–1212 (APITAYAQQT…ESLDVIIRSP (182 aa)). Active-site charge relay system; for serine protease NS3 activity residues include histidine 1087 and aspartate 1111. Residues cysteine 1127 and cysteine 1129 each contribute to the Zn(2+) site. Residue serine 1169 is the Charge relay system; for serine protease NS3 activity of the active site. 2 residues coordinate Zn(2+): cysteine 1175 and histidine 1179. One can recognise a Helicase ATP-binding domain in the interval 1221–1373 (PAVPQTYQVG…PNIEEVALGH (153 aa)). 1234 to 1241 (APTGSGKS) is a binding site for ATP. Mg(2+) is bound by residues serine 1241 and glutamate 1321. The short motif at 1320-1323 (DECH) is the DECH box element. The RNA-binding stretch occupies residues 1490-1502 (QRRGRTGRGRLGI). Residues 1662 to 1682 (STWVLAGGVLAAIAAYCLATG) traverse the membrane as a helical segment. The NS3-binding stretch occupies residues 1683–1694 (CVVCIGRVNINQ). Residues 1683–1809 (CVVCIGRVNI…ALTSPLPTST (127 aa)) are Cytoplasmic-facing. A helical membrane pass occupies residues 1810–1830 (TILLNIMGGWLASQIAPAAGA). Residues 1831 to 1832 (TG) lie on the Lumenal side of the membrane. A helical transmembrane segment spans residues 1833–1853 (FVVSGLVGAAVGSIGLGKILV). Aspartate 1854 is a topological domain (cytoplasmic). The helical transmembrane segment at 1855 to 1875 (VLAGYGAGISGALVAFKIMSG) threads the bilayer. Over 1876 to 1885 (EKPSVEDVVN) the chain is Lumenal. Residues 1886-1906 (LLPGILSPGALVVGVICAAIL) form a helical membrane-spanning segment. Topologically, residues 1907 to 1976 (RRHVGQGEGA…WITEDCPVPC (70 aa)) are cytoplasmic. Cysteine 1976 is lipidated: S-palmitoyl cysteine; by host. Residues 1977–2007 (AGSWLRDIWDWACTILTDFKNWLSTKLLPKM) lie within the membrane without spanning it. Over 2008 to 3012 (PGLPFISCQR…YHSVSRARPR (1005 aa)) the chain is Cytoplasmic. Cysteine 2015, cysteine 2033, cysteine 2035, and cysteine 2056 together coordinate Zn(2+). Residues 2124 to 2212 (EFFSWVDGVQ…ASSSASQLSA (89 aa)) form an FKBP8-binding region. Residues 2124–2332 (EFFSWVDGVQ…PTPPPRRRRA (209 aa)) are transcriptional activation. The tract at residues 2139–2143 (PTPKP) is interaction with non-structural protein 4A. Residues 2193–2212 (RLARGSPPSEASSSASQLSA) form a disordered region. The segment at 2193–2460 (RLARGSPPSE…ALITPCGPEE (268 aa)) is interaction with host SKP2. 6 positions are modified to phosphoserine; by host: serine 2198, serine 2201, serine 2205, serine 2208, serine 2211, and serine 2214. Residues 2198 to 2212 (SPPSEASSSASQLSA) show a composition bias toward low complexity. The tract at residues 2214–2249 (SLRATCTAHAKNYAVEMVDANFFMGSDVTRIESETK) is ISDR. The interaction with EIF2AK2/PKR stretch occupies residues 2214–2275 (SLRATCTAHA…REPSVPSEYL (62 aa)). Positions 2249–2306 (KVLILDSLDPSVEEEDEREPSVPSEYLLPKKKFPQALPVWARPDYNPPVVETWKRPDY) are NS4B-binding. The V3 stretch occupies residues 2299–2376 (ETWKRPDYDP…MDTTDATDQP (78 aa)). A disordered region spans residues 2308-2328 (PPTVSGCALPPRVTAPTPPPR). Positions 2322-2325 (APTP) match the SH3-binding motif. The Nuclear localization signal signature appears at 2327 to 2335 (PRRRRALVL). A Glycyl lysine isopeptide (Lys-Gly) (interchain with G-Cter in ubiquitin) cross-link involves residue lysine 2350. The tract at residues 2353–2431 (GQLPPSCDSG…PDLDSGSWST (79 aa)) is disordered. A compositionally biased stretch (polar residues) spans 2361 to 2373 (SGRSTGMDTTDAT). Residues serine 2471 and serine 2484 each carry the phosphoserine; by host modification. One can recognise a RdRp catalytic domain in the interval 2656-2774 (PMGFSYDTRC…ISESQGAEED (119 aa)). Mg(2+) is bound by residues aspartate 2662, aspartate 2760, and aspartate 2761. The chain crosses the membrane as a helical span at residues 3013–3033 (FLLLCLLLLSVGVGIFLLPAR).

Belongs to the hepacivirus polyprotein family. In terms of assembly, homooligomer. Interacts with E1 (via C-terminus). Interacts with the non-structural protein 5A. Interacts (via N-terminus) with host STAT1 (via SH2 domain); this interaction results in decreased STAT1 phosphorylation and ubiquitin-mediated proteasome-dependent STAT1 degradation, leading to decreased IFN-stimulated gene transcription. Interacts with host STAT3; this interaction constitutively activates STAT3. Interacts with host LTBR receptor. Interacts with host TNFRSF1A receptor and possibly induces apoptosis. Interacts with host HNRPK. Interacts with host YWHAE. Interacts with host UBE3A/E6AP. Interacts with host DDX3X. Interacts with host APOA2. Interacts with host RXRA protein. Interacts with host SP110 isoform 3/Sp110b; this interaction sequesters the transcriptional corepressor SP110 away from the nucleus. Interacts with host CREB3 nuclear transcription protein; this interaction triggers cell transformation. Interacts with host ACY3. Interacts with host C1QR1. Interacts with host RBM24; this interaction, which enhances the interaction of the mature core protein with 5'-UTR, may inhibit viral translation and favor replication. Interacts with host EIF2AK2/PKR; this interaction induces the autophosphorylation of EIF2AK2. Part of the viral assembly initiation complex composed of NS2, E1, E2, NS3, NS4A, NS5A and the mature core protein. Forms a heterodimer with envelope glycoprotein E2. Interacts with mature core protein. Interacts with protease NS2. The heterodimer E1/E2 interacts with host CLDN1; this interaction plays a role in viral entry into host cell. Interacts with host SPSB2 (via C-terminus). Part of the viral assembly initiation complex composed of NS2, E1, E2, NS3, NS4A, NS5A and the mature core protein. Interacts with host NEURL3; this interaction prevents E1 binding to glycoprotein E2. As to quaternary structure, forms a heterodimer with envelope glycoprotein E1. Interacts with host CD81 and SCARB1 receptors; these interactions play a role in viral entry into host cell. Interacts with host EIF2AK2/PKR; this interaction inhibits EIF2AK2 and probably allows the virus to evade the innate immune response. Interacts with host CD209/DC-SIGN and CLEC4M/DC-SIGNR. Interact with host SPCS1; this interaction is essential for viral particle assembly. Interacts with protease NS2. The heterodimer E1/E2 interacts with host CLDN1; this interaction plays a role in viral entry into host cell. Part of the viral assembly initiation complex composed of NS2, E1, E2, NS3, NS4A, NS5A and the mature core protein. Interacts with host SLC3A2/4F2hc; the interaction may facilitate viral entry into host cell. Interacts with human PLSCR1. In terms of assembly, homohexamer. Homoheptamer. Interacts with protease NS2. Homodimer. Interacts with host SPCS1; this interaction is essential for viral particle assembly. Interacts with envelope glycoprotein E1. Interacts with envelope glycoprotein E2. Interacts with viroporin p7. Interacts with serine protease/helicase NS3. Part of the replication complex composed of NS2, NS3, NS4A, NS4B, NS5A and the RNA-directed RNA polymerase embedded in an ER-derived membranous web. Part of the viral assembly initiation complex composed of NS2, E1, E2, NS3, NS4A, NS5A and the mature core protein. As to quaternary structure, interacts with protease NS2. Interacts with non-structural protein 4A; this interaction stabilizes the folding of NS3 serine protease. NS3-NS4A interaction is essential for NS3 activation and allows membrane anchorage of the latter. NS3/NS4A complex also prevents phosphorylation of host IRF3, thus preventing the establishment of dsRNA induced antiviral state. Interacts with host MAVS; this interaction leads to the cleavage and inhibition of host MAVS. Interacts with host TICAM1; this interaction leads to the cleavage and inhibition of host TICAM1. Interacts with host TANK-binding kinase/TBK1; this interaction results in the inhibition of the association between TBK1 and IRF3, which leads to the inhibition of IRF3 activation. Interacts with host RBM24. Part of the replication complex composed of NS2, NS3, NS4A, NS4B, NS5A and the RNA-directed RNA polymerase embedded in an ER-derived membranous web. Part of the viral assembly initiation complex composed of NS2, E1, E2, NS3, NS4A, NS5A and the mature core protein. In terms of assembly, interacts with NS3 serine protease; this interaction stabilizes the folding of NS3 serine protease. NS3-NS4A interaction is essential for NS3 activation and allows membrane anchorage of the latter. Interacts with non-structural protein 5A (via N-terminus). Part of the replication complex composed of NS2, NS3, NS4A, NS4B, NS5A and the RNA-directed RNA polymerase embedded in an ER-derived membranous web. Part of the viral assembly initiation complex composed of NS2, E1, E2, NS3, NS4A, NS5A and the mature core protein. Homomultimer. Interacts with non-structural protein NS5A. Interacts with host PLA2G4C; this interaction likely initiates the recruitment of replication complexes to lipid droplets. Interacts with host STING; this interaction disrupts the interaction between STING and TBK1 thereby suppressing the interferon signaling. Part of the replication complex composed of NS2, NS3, NS4A, NS4B, NS5A and the RNA-directed RNA polymerase embedded in an ER-derived membranous web. As to quaternary structure, monomer. Homodimer; dimerization is required for RNA-binding. Interacts with the mature core protein. Interacts (via N-terminus) with non-structural protein 4A. Interacts with non-structural protein 4B. Interacts (via region D2) with RNA-directed RNA polymerase. Part of the viral assembly initiation complex composed of NS2, E1, E2, NS3, NS4A, NS5A and the mature core protein. Part of the replication complex composed of NS2, NS3, NS4A, NS4B, NS5A and the RNA-directed RNA polymerase embedded in an ER-derived membranous web. Interacts with host GRB2. Interacts with host BIN1. Interacts with host PIK3R1. Interacts with host SRCAP. Interacts with host FKBP8. Interacts (via C-terminus) with host VAPB (via MSP domain). Interacts with host EIF2AK2/PKR; this interaction leads to disruption of EIF2AK2 dimerization by NS5A and probably allows the virus to evade the innate immune response. Interacts (via N-terminus) with host PACSIN2 (via N-terminus); this interaction attenuates protein kinase C alpha-mediated phosphorylation of PACSIN2 by disrupting the interaction between PACSIN2 and PRKCA. Interacts (via N-terminus) with host SRC kinase (via SH2 domain). Interacts with most Src-family kinases. Interacts with host IFI27 and SKP2; promotes the ubiquitin-mediated proteasomal degradation of NS5A. Interacts with host GPS2. Interacts with host TNFRSF21; this interaction allows the modulation by the virus of JNK, p38 MAPK, STAT3, and Akt signaling pathways in a DR6-dependent manner. Interacts (via N-terminus) with host CIDEB (via N-terminus); this interaction seems to regulate the association of HCV particles with APOE. Interacts with host CHKA/Choline Kinase-alpha; CHKA bridges host PI4KA and NS5A and potentiates NS5A-stimulated PI4KA activity, which then facilitates the targeting of the ternary complex to the ER for viral replication. Interacts with host SPSB2 (via C-terminus); this interaction targets NS5A for ubiquitination and degradation. Interacts with host RAB18; this interaction may promote the association of NS5A and other replicase components with lipid droplets. Interacts (via region D2) with host PPIA/CYPA; the interaction stimulates RNA-binding ability of NS5A and is dependent on the peptidyl-prolyl cis-trans isomerase activity of PPIA/CYPA. Interacts with host TRIM14; this interaction induces the degradation of NS5A. In terms of assembly, homooligomer. Interacts with non-structural protein 5A. Interacts with host VAPB. Interacts with host PRK2/PKN2. Interacts with host HNRNPA1 and SEPT6; these interactions facilitate viral replication. Part of the replication complex composed of NS2, NS3, NS4A, NS4B, NS5A and the RNA-directed RNA polymerase. Requires Zn(2+) as cofactor. Mg(2+) is required as a cofactor. Post-translationally, specific enzymatic cleavages in vivo yield mature proteins. The structural proteins, core, E1, E2 and p7 are produced by proteolytic processing by host signal peptidases. The core protein precursor is synthesized as a 23 kDa, which is retained in the ER membrane through the hydrophobic signal peptide. Cleavage by the signal peptidase releases the 21 kDa mature core protein. The cleavage of the core protein precursor occurs between aminoacids 176 and 188 but the exact cleavage site is not known. Some degraded forms of the core protein appear as well during the course of infection. The other proteins (p7, NS2, NS3, NS4A, NS4B, NS5A and NS5B) are cleaved by the viral proteases. Autoprocessing between NS2 and NS3 is mediated by the NS2 cysteine protease catalytic domain and regulated by the NS3 N-terminal domain. In terms of processing, phosphorylated by host PKC and PKA. Ubiquitinated; mediated by UBE3A and leading to core protein subsequent proteasomal degradation. Post-translationally, highly N-glycosylated. In terms of processing, palmitoylation is required for NS2/3 autoprocessing and E2 recruitment to membranes. Palmitoylated. This modification may play a role in its polymerization or in protein-protein interactions. Post-translationally, phosphorylated on serines in a basal form termed p56. p58 is a hyperphosphorylated form of p56. p56 and p58 coexist in the cell in roughly equivalent amounts. Hyperphosphorylation is dependent on the presence of NS4A. Host CSNK1A1/CKI-alpha or RPS6KB1 kinases may be responsible for NS5A phosphorylation. In terms of processing, tyrosine phosphorylation is essential for the interaction with host SRC. Ubiquitinated. Ubiquitination, most probably at Lys-2350, mediated by host IFI27 and SKP2 leads to proteasomal degradation, restricting viral infection. Ubiquitination by host TRIM22 leads to interruption of viral replication. Post-translationally, the N-terminus is phosphorylated by host PRK2/PKN2.

It localises to the host endoplasmic reticulum membrane. The protein resides in the host mitochondrion membrane. The protein localises to the virion. It is found in the host cytoplasm. Its subcellular location is the host nucleus. It localises to the host lipid droplet. The protein resides in the virion membrane. The protein localises to the host mitochondrion. It is found in the host cell membrane. Its subcellular location is the host perinuclear region. It carries out the reaction Hydrolysis of four peptide bonds in the viral precursor polyprotein, commonly with Asp or Glu in the P6 position, Cys or Thr in P1 and Ser or Ala in P1'.. The enzyme catalyses a ribonucleoside 5'-triphosphate + H2O = a ribonucleoside 5'-diphosphate + phosphate + H(+). The catalysed reaction is ATP + H2O = ADP + phosphate + H(+). It catalyses the reaction RNA(n) + a ribonucleoside 5'-triphosphate = RNA(n+1) + diphosphate. Its activity is regulated as follows. Inhibited by the antiviral drug hexamethylene amiloride. Inhibition by amantadine appears to be genotype-dependent. Also inhibited by long-alkyl-chain iminosugar derivatives. With respect to regulation, activity is up-regulated by PRK2/PKN2-mediated phosphorylation. Its function is as follows. Packages viral RNA to form a viral nucleocapsid, and promotes virion budding. Participates in the viral particle production as a result of its interaction with the non-structural protein 5A. Binds RNA and may function as a RNA chaperone to induce the RNA structural rearrangements taking place during virus replication. Modulates viral translation initiation by interacting with viral IRES and 40S ribosomal subunit. Affects various cell signaling pathways, host immunity and lipid metabolism. Prevents the establishment of cellular antiviral state by blocking the interferon-alpha/beta (IFN-alpha/beta) and IFN-gamma signaling pathways and by blocking the formation of phosphorylated STAT1 and promoting ubiquitin-mediated proteasome-dependent degradation of STAT1. Activates STAT3 leading to cellular transformation. Regulates the activity of cellular genes, including c-myc and c-fos. May repress the promoter of p53, and sequester CREB3 and SP110 isoform 3/Sp110b in the cytoplasm. Represses cell cycle negative regulating factor CDKN1A, thereby interrupting an important check point of normal cell cycle regulation. Targets transcription factors involved in the regulation of inflammatory responses and in the immune response: suppresses TNF-induced NF-kappa-B activation, and activates AP-1. Binds to dendritic cells (DCs) via C1QR1, resulting in down-regulation of T-lymphocytes proliferation. Alters lipid metabolism by interacting with hepatocellular proteins involved in lipid accumulation and storage. Induces up-regulation of FAS promoter activity, and thereby contributes to the increased triglyceride accumulation in hepatocytes (steatosis). Forms a heterodimer with envelope glycoprotein E2, which mediates virus attachment to the host cell, virion internalization through clathrin-dependent endocytosis and fusion with host membrane. Fusion with the host cell is most likely mediated by both E1 and E2, through conformational rearrangements of the heterodimer required for fusion rather than a classical class II fusion mechanism. E1/E2 heterodimer binds host apolipoproteins such as APOB and ApoE thereby forming a lipo-viro-particle (LVP). APOE associated to the LVP allows the initial virus attachment to cell surface receptors such as the heparan sulfate proteoglycans (HSPGs), syndecan-1 (SDC1), syndecan-1 (SDC2), the low-density lipoprotein receptor (LDLR) and scavenger receptor class B type I (SCARB1). The cholesterol transfer activity of SCARB1 allows E2 exposure and binding of E2 to SCARB1 and the tetraspanin CD81. E1/E2 heterodimer binding on CD81 activates the epithelial growth factor receptor (EGFR) signaling pathway. Diffusion of the complex E1-E2-EGFR-SCARB1-CD81 to the cell lateral membrane allows further interaction with Claudin 1 (CLDN1) and occludin (OCLN) to finally trigger HCV entry. Functionally, forms a heterodimer with envelope glycoprotein E1, which mediates virus attachment to the host cell, virion internalization through clathrin-dependent endocytosis and fusion with host membrane. Fusion with the host cell is most likely mediated by both E1 and E2, through conformational rearrangements of the heterodimer required for fusion rather than a classical class II fusion mechanism. The interaction between envelope glycoprotein E2 and host apolipoprotein E/APOE allows the proper assembly, maturation and infectivity of the viral particles. This interaction is probably promoted via the up-regulation of cellular autophagy by the virus. E1/E2 heterodimer binds host apolipoproteins such as APOB and APOE thereby forming a lipo-viro-particle (LVP). APOE associated to the LVP allows the initial virus attachment to cell surface receptors such as the heparan sulfate proteoglycans (HSPGs), syndecan-1 (SDC1), syndecan-1 (SDC2), the low-density lipoprotein receptor (LDLR) and scavenger receptor class B type I (SCARB1). The cholesterol transfer activity of SCARB1 allows E2 exposure and binding of E2 to SCARB1 and the tetraspanin CD81. E1/E2 heterodimer binding on CD81 activates the epithelial growth factor receptor (EGFR) signaling pathway. Diffusion of the complex E1-E2-EGFR-SCARB1-CD81 to the cell lateral membrane allows further interaction with Claudin 1 (CLDN1) and occludin (OCLN) to finally trigger HCV entry. Inhibits host EIF2AK2/PKR activation, preventing the establishment of an antiviral state. Viral ligand for CD209/DC-SIGN and CLEC4M/DC-SIGNR, which are respectively found on dendritic cells (DCs), and on liver sinusoidal endothelial cells and macrophage-like cells of lymph node sinuses. These interactions allow the capture of circulating HCV particles by these cells and subsequent facilitated transmission to permissive cells such as hepatocytes and lymphocyte subpopulations. The interaction between E2 and host amino acid transporter complex formed by SLC3A2 and SLC7A5/LAT1 may facilitate viral entry into host cell. In terms of biological role, ion channel protein that acts as a viroporin and plays an essential role in the assembly, envelopment and secretion of viral particles. Regulates the host cell secretory pathway, which induces the intracellular retention of viral glycoproteins and favors assembly of viral particles. Creates a pore in acidic organelles and releases Ca(2+) and H(+) in the cytoplasm of infected cells, leading to a productive viral infection. High levels of cytoplasmic Ca(2+) may trigger membrane trafficking and transport of viral ER-associated proteins to viroplasms, sites of viral genome replication. This ionic imbalance induces the assembly of the inflammasome complex, which triggers the maturation of pro-IL-1beta into IL-1beta through the action of caspase-1. Targets also host mitochondria and induces mitochondrial depolarization. In addition of its role as a viroporin, acts as a lipid raft adhesion factor. Its function is as follows. Cysteine protease required for the proteolytic auto-cleavage between the non-structural proteins NS2 and NS3. The N-terminus of NS3 is required for the function of NS2 protease (active region NS2-3). Promotes the initiation of viral particle assembly by mediating the interaction between structural and non-structural proteins. Displays three enzymatic activities: serine protease with a chymotrypsin-like fold, NTPase and RNA helicase. NS3 serine protease, in association with NS4A, is responsible for the cleavages of NS3-NS4A, NS4A-NS4B, NS4B-NS5A and NS5A-NS5B. The NS3/NS4A complex prevents phosphorylation of host IRF3, thus preventing the establishment of dsRNA induced antiviral state. The NS3/NS4A complex induces host amino acid transporter component SLC3A2, thus contributing to HCV propagation. NS3 RNA helicase binds to RNA and unwinds both dsDNA and dsRNA in the 3' to 5' direction, and likely resolves RNA complicated stable secondary structures in the template strand. Binds a single ATP and catalyzes the unzipping of a single base pair of dsRNA. Inhibits host antiviral proteins TBK1 and IRF3 thereby preventing the establishment of an antiviral state. Cleaves host MAVS/CARDIF thereby preventing the establishment of an antiviral state. Cleaves host TICAM1/TRIF, thereby disrupting TLR3 signaling and preventing the establishment of an antiviral state. Functionally, peptide cofactor which forms a non-covalent complex with the N-terminal of NS3 serine protease. The NS3/NS4A complex prevents phosphorylation of host IRF3, thus preventing the establishment of dsRNA induced antiviral state. The NS3/NS4A complex induces host amino acid transporter component SLC3A2, thus contributing to HCV propagation. In terms of biological role, induces a specific membrane alteration that serves as a scaffold for the virus replication complex. This membrane alteration gives rise to the so-called ER-derived membranous web that contains the replication complex. NS4B self-interaction contributes to its function in membranous web formation. Promotes host TRIF protein degradation in a CASP8-dependent manner thereby inhibiting host TLR3-mediated interferon signaling. Disrupts the interaction between STING and TBK1 contributing to the inhibition of interferon signaling. Its function is as follows. Phosphorylated protein that is indispensable for viral replication and assembly. Both hypo- and hyperphosphorylated states are required for the viral life cycle. The hyperphosphorylated form of NS5A is an inhibitor of viral replication. Involved in RNA-binding and especially in binding to the viral genome. Zinc is essential for RNA-binding. Participates in the viral particle production as a result of its interaction with the mature viral core protein. Its interaction with host VAPB may target the viral replication complex to vesicles. Down-regulates viral IRES translation initiation. Mediates interferon resistance, presumably by interacting with and inhibiting host EIF2AK2/PKR. Prevents BIN1-induced apoptosis. Acts as a transcriptional activator of some host genes important for viral replication when localized in the nucleus. Via the interaction with host PACSIN2, modulates lipid droplet formation in order to promote virion assembly. Modulates TNFRSF21/DR6 signaling pathway for viral propagation. RNA-dependent RNA polymerase that performs primer-template recognition and RNA synthesis during viral replication. Initiates RNA transcription/replication at a flavin adenine dinucleotide (FAD), resulting in a 5'- FAD cap on viral RNAs. In this way, recognition of viral 5' RNA by host pattern recognition receptors can be bypassed, thereby evading activation of antiviral pathways. This chain is Genome polyprotein, found in Hepatitis C virus genotype 2k (isolate VAT96) (HCV).